The chain runs to 194 residues: PBAN-type neuropeptides (194 aa).

The first 23 residues, 1–23 (MFNQTQLFVFLAVFTTSSVLGNN), serve as a signal peptide directing secretion. L47 carries the post-translational modification Leucine amide. Positions 51 to 94 (SLRISTEDNRQAFFKLLEAADALKYYYDQLPYEMQADEPETRVT) are excised as a propeptide. L103, L123, L159, and L169 each carry leucine amide. The propeptide occupies 172 to 194 (ELSYDMMPNKIRVVRSTNKTRST).

This sequence belongs to the pyrokinin family. As to expression, expressed in the subesophageal ganglions. Not found in corpora cardiaca, corpora allata and thoracic ganglia.

Its subcellular location is the secreted. Its function is as follows. A hormone that controls sex pheromone production in females and pheromone responsiveness in male. Also mediates visceral muscle contractile activity (myotropic activity). The sequence is that of PBAN-type neuropeptides from Helicoverpa zea (Corn earworm moth).